Reading from the N-terminus, the 134-residue chain is MNPLVYFSSSSENTHRFVEKLSLPAMRIPIAGARSKLLMETPYILIVPSYGGGSAVGAVPIQVIRFLNDPQNRAFLRGVIAAGNTNFGAAYGIAGDIIAKKCQVPFLYRFELLGTTQDVANVRQGVTAFWQRQN.

This sequence belongs to the NrdI family.

Its function is as follows. Probably involved in ribonucleotide reductase function. The chain is Protein NrdI from Serratia proteamaculans (strain 568).